Here is a 782-residue protein sequence, read N- to C-terminus: E3 UFM1-protein ligase 1 homolog (782 aa).

The disordered stretch occupies residues 405–478 (VSTQELEDDG…TRGGGGASKK (74 aa)).

The protein belongs to the UFL1 family.

E3 UFM1-protein ligase that mediates ufmylation of target proteins. The chain is E3 UFM1-protein ligase 1 homolog from Drosophila simulans (Fruit fly).